The sequence spans 359 residues: 3-dehydroquinate synthase (359 aa).

Residues Asp-71–Lys-76, Gly-105–Asp-109, Thr-129–Thr-130, Lys-142, Lys-151, and Cys-169–Thr-172 contribute to the NAD(+) site. Zn(2+) contacts are provided by Glu-184, His-247, and His-264.

It belongs to the sugar phosphate cyclases superfamily. Dehydroquinate synthase family. Requires Co(2+) as cofactor. Zn(2+) serves as cofactor. It depends on NAD(+) as a cofactor.

Its subcellular location is the cytoplasm. It catalyses the reaction 7-phospho-2-dehydro-3-deoxy-D-arabino-heptonate = 3-dehydroquinate + phosphate. It functions in the pathway metabolic intermediate biosynthesis; chorismate biosynthesis; chorismate from D-erythrose 4-phosphate and phosphoenolpyruvate: step 2/7. Catalyzes the conversion of 3-deoxy-D-arabino-heptulosonate 7-phosphate (DAHP) to dehydroquinate (DHQ). This Baumannia cicadellinicola subsp. Homalodisca coagulata protein is 3-dehydroquinate synthase.